Here is a 420-residue protein sequence, read N- to C-terminus: Putative phosphate permease HI_1604 (420 aa).

The next 12 helical transmembrane spans lie at 8 to 28, 49 to 69, 88 to 108, 112 to 132, 145 to 165, 185 to 205, 216 to 236, 250 to 270, 300 to 320, 343 to 363, 370 to 390, and 393 to 413; these read GSWL…GIGA, AIII…GEVT, ILAL…FIAT, WPVS…CITI, IVGS…AIFA, GPYY…KKGL, ETLI…HFYF, FGAV…AMAF, GGAL…VGLI, FAAQ…GLPI, VGAI…LTVI, and IISS…IIFY.

Belongs to the inorganic phosphate transporter (PiT) (TC 2.A.20) family.

It is found in the cell inner membrane. Its function is as follows. Potential transporter for phosphate. This Haemophilus influenzae (strain ATCC 51907 / DSM 11121 / KW20 / Rd) protein is Putative phosphate permease HI_1604.